A 158-amino-acid chain; its full sequence is Ribosome maturation factor RimP (158 aa).

Belongs to the RimP family.

Its subcellular location is the cytoplasm. Required for maturation of 30S ribosomal subunits. The chain is Ribosome maturation factor RimP from Lactobacillus acidophilus (strain ATCC 700396 / NCK56 / N2 / NCFM).